A 296-amino-acid chain; its full sequence is Ribosomal RNA small subunit methyltransferase A (296 aa).

S-adenosyl-L-methionine-binding residues include N28, L30, G55, E77, D103, and N122.

The protein belongs to the class I-like SAM-binding methyltransferase superfamily. rRNA adenine N(6)-methyltransferase family. RsmA subfamily.

The protein localises to the cytoplasm. The catalysed reaction is adenosine(1518)/adenosine(1519) in 16S rRNA + 4 S-adenosyl-L-methionine = N(6)-dimethyladenosine(1518)/N(6)-dimethyladenosine(1519) in 16S rRNA + 4 S-adenosyl-L-homocysteine + 4 H(+). Specifically dimethylates two adjacent adenosines (A1518 and A1519) in the loop of a conserved hairpin near the 3'-end of 16S rRNA in the 30S particle. May play a critical role in biogenesis of 30S subunits. The polypeptide is Ribosomal RNA small subunit methyltransferase A (Sinorhizobium fredii (strain NBRC 101917 / NGR234)).